A 145-amino-acid chain; its full sequence is Large ribosomal subunit protein bL17 (145 aa).

This sequence belongs to the bacterial ribosomal protein bL17 family. In terms of assembly, part of the 50S ribosomal subunit. Contacts protein L32.

The chain is Large ribosomal subunit protein bL17 from Francisella tularensis subsp. holarctica (strain FTNF002-00 / FTA).